The primary structure comprises 62 residues: Photosystem II reaction center protein Z (62 aa).

2 helical membrane-spanning segments follow: residues 8–28 (AVFA…VVFA) and 41–61 (FSGT…NSLI).

Belongs to the PsbZ family. As to quaternary structure, PSII is composed of 1 copy each of membrane proteins PsbA, PsbB, PsbC, PsbD, PsbE, PsbF, PsbH, PsbI, PsbJ, PsbK, PsbL, PsbM, PsbT, PsbY, PsbZ, Psb30/Ycf12, at least 3 peripheral proteins of the oxygen-evolving complex and a large number of cofactors. It forms dimeric complexes.

The protein resides in the plastid. Its subcellular location is the chloroplast thylakoid membrane. Functionally, may control the interaction of photosystem II (PSII) cores with the light-harvesting antenna, regulates electron flow through the 2 photosystem reaction centers. PSII is a light-driven water plastoquinone oxidoreductase, using light energy to abstract electrons from H(2)O, generating a proton gradient subsequently used for ATP formation. In Pisum sativum (Garden pea), this protein is Photosystem II reaction center protein Z.